The following is a 404-amino-acid chain: Cysteine desulfurase IscS (404 aa).

Pyridoxal 5'-phosphate-binding positions include 75–76 (AT), Asn155, Gln183, and 203–205 (SGH). Position 206 is an N6-(pyridoxal phosphate)lysine (Lys206). A pyridoxal 5'-phosphate-binding site is contributed by Thr243. Cys328 functions as the Cysteine persulfide intermediate in the catalytic mechanism. Cys328 contacts [2Fe-2S] cluster.

It belongs to the class-V pyridoxal-phosphate-dependent aminotransferase family. NifS/IscS subfamily. In terms of assembly, homodimer. Forms a heterotetramer with IscU, interacts with other sulfur acceptors. Pyridoxal 5'-phosphate serves as cofactor.

The protein resides in the cytoplasm. The enzyme catalyses (sulfur carrier)-H + L-cysteine = (sulfur carrier)-SH + L-alanine. It participates in cofactor biosynthesis; iron-sulfur cluster biosynthesis. Functionally, master enzyme that delivers sulfur to a number of partners involved in Fe-S cluster assembly, tRNA modification or cofactor biosynthesis. Catalyzes the removal of elemental sulfur atoms from cysteine to produce alanine. Functions as a sulfur delivery protein for Fe-S cluster synthesis onto IscU, an Fe-S scaffold assembly protein, as well as other S acceptor proteins. In Klebsiella pneumoniae (strain 342), this protein is Cysteine desulfurase IscS.